Reading from the N-terminus, the 291-residue chain is Homoserine kinase (291 aa).

An ATP-binding site is contributed by 80–90 (RPASGLGSSAA).

This sequence belongs to the GHMP kinase family. Homoserine kinase subfamily.

The protein resides in the cytoplasm. It catalyses the reaction L-homoserine + ATP = O-phospho-L-homoserine + ADP + H(+). It functions in the pathway amino-acid biosynthesis; L-threonine biosynthesis; L-threonine from L-aspartate: step 4/5. Its function is as follows. Catalyzes the ATP-dependent phosphorylation of L-homoserine to L-homoserine phosphate. This chain is Homoserine kinase, found in Natronomonas pharaonis (strain ATCC 35678 / DSM 2160 / CIP 103997 / JCM 8858 / NBRC 14720 / NCIMB 2260 / Gabara) (Halobacterium pharaonis).